The primary structure comprises 365 residues: S-adenosylmethionine:tRNA ribosyltransferase-isomerase (365 aa).

It belongs to the QueA family. In terms of assembly, monomer.

Its subcellular location is the cytoplasm. The catalysed reaction is 7-aminomethyl-7-carbaguanosine(34) in tRNA + S-adenosyl-L-methionine = epoxyqueuosine(34) in tRNA + adenine + L-methionine + 2 H(+). Its pathway is tRNA modification; tRNA-queuosine biosynthesis. In terms of biological role, transfers and isomerizes the ribose moiety from AdoMet to the 7-aminomethyl group of 7-deazaguanine (preQ1-tRNA) to give epoxyqueuosine (oQ-tRNA). The protein is S-adenosylmethionine:tRNA ribosyltransferase-isomerase of Helicobacter hepaticus (strain ATCC 51449 / 3B1).